The following is a 245-amino-acid chain: Adenosylcobinamide-GDP ribazoletransferase (245 aa).

A run of 5 helical transmembrane segments spans residues 35–55 (WFPL…ALGL), 108–128 (IGAF…IGAH), 137–157 (GVLI…AALV), 176–196 (IAIG…TPAI), and 197–217 (TTVT…HLAR).

Belongs to the CobS family. It depends on Mg(2+) as a cofactor.

The protein resides in the cell inner membrane. It carries out the reaction alpha-ribazole + adenosylcob(III)inamide-GDP = adenosylcob(III)alamin + GMP + H(+). The catalysed reaction is alpha-ribazole 5'-phosphate + adenosylcob(III)inamide-GDP = adenosylcob(III)alamin 5'-phosphate + GMP + H(+). It participates in cofactor biosynthesis; adenosylcobalamin biosynthesis; adenosylcobalamin from cob(II)yrinate a,c-diamide: step 7/7. Functionally, joins adenosylcobinamide-GDP and alpha-ribazole to generate adenosylcobalamin (Ado-cobalamin). Also synthesizes adenosylcobalamin 5'-phosphate from adenosylcobinamide-GDP and alpha-ribazole 5'-phosphate. The protein is Adenosylcobinamide-GDP ribazoletransferase of Nitratidesulfovibrio vulgaris (strain ATCC 29579 / DSM 644 / CCUG 34227 / NCIMB 8303 / VKM B-1760 / Hildenborough) (Desulfovibrio vulgaris).